Here is a 768-residue protein sequence, read N- to C-terminus: Photosystem I P700 chlorophyll a apoprotein A1 (768 aa).

8 consecutive transmembrane segments (helical) span residues 76 to 99 (VFSAHFGHLAVIFIWMSAAFFHGA), 162 to 185 (LMALAIGALLMAAIMLHGGIYHYH), 201 to 225 (LNHHIAGLVGLGSIAWAGHCIHIGA), 310 to 328 (ISHHHLAFGVLAVLGGHLY), 369 to 392 (WHAQLGLNLAMIGSLSIIISHHMY), 408 to 434 (LGLFTHHMWIGGLFIVGAAAHAGIAMI), 456 to 478 (ALISHLNWACMFLGFHSFGLYIH), and 559 to 577 (FMIHHIHAFTIHVTLLILL). Residues Cys-601 and Cys-610 each contribute to the [4Fe-4S] cluster site. The next 2 helical transmembrane spans lie at 617–638 (HVFLGLFWMYNGLSVVIFHFSW) and 682–704 (ISMYGLMFLGAHFVWAFSLMFLF). A divinylchlorophyll a'-binding site is contributed by His-693. The divinyl chlorophyll a site is built by Met-701 and Tyr-709. Trp-710 provides a ligand contact to phylloquinone. The chain crosses the membrane as a helical span at residues 742–762 (AVGAAHFLLGGIATTWAFFHA).

This sequence belongs to the PsaA/PsaB family. The PsaA/B heterodimer binds the P700 divinyl chlorophyll special pair and subsequent electron acceptors. PSI consists of a core antenna complex that captures photons, and an electron transfer chain that converts photonic excitation into a charge separation. The cyanobacterial PSI reaction center is composed of one copy each of PsaA,B,C,D,E,F,I,J,K,L,M and X, and forms trimeric complexes. It depends on PSI electron transfer chain: 5 divinyl chlorophyll a, 1 divinyl chlorophyll a', 2 phylloquinones and 3 4Fe-4S clusters. PSI core antenna: 90 divinyl chlorophyll a, 22 carotenoids, 3 phospholipids and 1 galactolipid. P700 is a divinyl chlorophyll a/divinyl chlorophyll a' dimer, A0 is one or more divinyl chlorophyll a, A1 is one or both phylloquinones and FX is a shared 4Fe-4S iron-sulfur center. as a cofactor.

It localises to the cellular thylakoid membrane. The catalysed reaction is reduced [plastocyanin] + hnu + oxidized [2Fe-2S]-[ferredoxin] = oxidized [plastocyanin] + reduced [2Fe-2S]-[ferredoxin]. Functionally, psaA and PsaB bind P700, the primary electron donor of photosystem I (PSI), as well as the electron acceptors A0, A1 and FX. PSI is a plastocyanin/cytochrome c6-ferredoxin oxidoreductase, converting photonic excitation into a charge separation, which transfers an electron from the donor P700 chlorophyll pair to the spectroscopically characterized acceptors A0, A1, FX, FA and FB in turn. Oxidized P700 is reduced on the lumenal side of the thylakoid membrane by plastocyanin or cytochrome c6. This is Photosystem I P700 chlorophyll a apoprotein A1 from Prochlorococcus marinus (strain NATL2A).